Consider the following 271-residue polypeptide: ATP synthase subunit a (271 aa).

The next 5 membrane-spanning stretches (helical) occupy residues phenylalanine 38–alanine 58, valine 100–leucine 120, aspartate 146–isoleucine 166, leucine 211–tryptophan 231, and alanine 242–valine 262.

The protein belongs to the ATPase A chain family. F-type ATPases have 2 components, CF(1) - the catalytic core - and CF(0) - the membrane proton channel. CF(1) has five subunits: alpha(3), beta(3), gamma(1), delta(1), epsilon(1). CF(0) has three main subunits: a(1), b(2) and c(9-12). The alpha and beta chains form an alternating ring which encloses part of the gamma chain. CF(1) is attached to CF(0) by a central stalk formed by the gamma and epsilon chains, while a peripheral stalk is formed by the delta and b chains.

Its subcellular location is the cell inner membrane. Functionally, key component of the proton channel; it plays a direct role in the translocation of protons across the membrane. The sequence is that of ATP synthase subunit a from Klebsiella pneumoniae (strain 342).